A 713-amino-acid chain; its full sequence is Polyribonucleotide nucleotidyltransferase (713 aa).

Mg(2+) contacts are provided by Asp-494 and Asp-500. Residues 561-623 enclose the KH domain; it reads PSFSTMTIPK…EAVQSAEKRV (63 aa). In terms of domain architecture, S1 motif spans 633-702; sequence GDVYQGTVKS…KSGKYKLSRK (70 aa).

This sequence belongs to the polyribonucleotide nucleotidyltransferase family. The cofactor is Mg(2+).

It localises to the cytoplasm. It catalyses the reaction RNA(n+1) + phosphate = RNA(n) + a ribonucleoside 5'-diphosphate. In terms of biological role, involved in mRNA degradation. Catalyzes the phosphorolysis of single-stranded polyribonucleotides processively in the 3'- to 5'-direction. This chain is Polyribonucleotide nucleotidyltransferase, found in Amoebophilus asiaticus (strain 5a2).